The following is a 344-amino-acid chain: Lipase chaperone (344 aa).

Residues 14–34 (AVVYGVVGLAAIAGVAMWSGA) traverse the membrane as a helical segment. Residues 39–78 (ATGASGESPEASVAGGSVTAPPQAAVPASTGLPPSLAGSS) form a disordered region.

Belongs to the lipase chaperone family.

The protein resides in the cell inner membrane. Functionally, may be involved in the folding of the extracellular lipase during its passage through the periplasm. The protein is Lipase chaperone (lifO) of Pseudomonas sp. (strain KWI-56).